We begin with the raw amino-acid sequence, 66 residues long: Large ribosomal subunit protein bL33c (66 aa).

The protein belongs to the bacterial ribosomal protein bL33 family.

Its subcellular location is the plastid. It localises to the chloroplast. The protein is Large ribosomal subunit protein bL33c of Physcomitrium patens (Spreading-leaved earth moss).